A 204-amino-acid chain; its full sequence is Recombination protein RecR (204 aa).

A C4-type zinc finger spans residues 61-76 (CARCNTFSETQICSTC). One can recognise a Toprim domain in the interval 84 to 183 (SLLCIVETPA…KVTRIARGIP (100 aa)).

Belongs to the RecR family.

May play a role in DNA repair. It seems to be involved in an RecBC-independent recombinational process of DNA repair. It may act with RecF and RecO. This chain is Recombination protein RecR, found in Polynucleobacter asymbioticus (strain DSM 18221 / CIP 109841 / QLW-P1DMWA-1) (Polynucleobacter necessarius subsp. asymbioticus).